We begin with the raw amino-acid sequence, 194 residues long: DISHFQNFRVTLLEYLTENGMNGAQKASWNKAFDAFEKYIIMGLSSLERVDPITGLSGLEKNAILDTWGKVRGNLQEVGKATFGKLFAAHPEYQQMFRFFQGVQLAFLVQSPKFAAHTQRVVSALDQTLLALNRPSDQFVYMIKELGLDHINRGTDRSFVEYLKESLGDSVDEFTVQSFGEVIVNFLNEGLRQA.

2 consecutive Globin domains span residues 1–45 (DISH…MGLS) and 55–194 (GLSG…LRQA). Residue H150 participates in heme b binding.

The protein belongs to the globin family. As to quaternary structure, artemia hemoglobin is a dimer of two similar sized subunits. Each subunit represents a globin chain which exists in two forms (alpha and beta), thus making possible three different phenotypes (HB1, alpha(2), HB2, alpha/beta, HB3, beta(2)). The globin chain is a polymer of eight heme-binding covalently linked domains.

The sequence is that of Extracellular globin-E1 from Artemia sp. (Brine shrimp).